The primary structure comprises 212 residues: Imidazole glycerol phosphate synthase subunit HisH (212 aa).

A Glutamine amidotransferase type-1 domain is found at 1-210 (MIAVINYGAG…VRWSEAVQPK (210 aa)). C79 serves as the catalytic Nucleophile. Residues H185 and E187 contribute to the active site.

Heterodimer of HisH and HisF.

It is found in the cytoplasm. It catalyses the reaction 5-[(5-phospho-1-deoxy-D-ribulos-1-ylimino)methylamino]-1-(5-phospho-beta-D-ribosyl)imidazole-4-carboxamide + L-glutamine = D-erythro-1-(imidazol-4-yl)glycerol 3-phosphate + 5-amino-1-(5-phospho-beta-D-ribosyl)imidazole-4-carboxamide + L-glutamate + H(+). It carries out the reaction L-glutamine + H2O = L-glutamate + NH4(+). The protein operates within amino-acid biosynthesis; L-histidine biosynthesis; L-histidine from 5-phospho-alpha-D-ribose 1-diphosphate: step 5/9. Its function is as follows. IGPS catalyzes the conversion of PRFAR and glutamine to IGP, AICAR and glutamate. The HisH subunit catalyzes the hydrolysis of glutamine to glutamate and ammonia as part of the synthesis of IGP and AICAR. The resulting ammonia molecule is channeled to the active site of HisF. The sequence is that of Imidazole glycerol phosphate synthase subunit HisH from Chloroflexus aurantiacus (strain ATCC 29364 / DSM 637 / Y-400-fl).